Here is a 167-residue protein sequence, read N- to C-terminus: Ribosome maturation factor RimM (167 aa).

One can recognise a PRC barrel domain in the interval 94–166 (TGRAYLHELI…YMVVPRFDEF (73 aa)).

It belongs to the RimM family. As to quaternary structure, binds ribosomal protein uS19.

It localises to the cytoplasm. Functionally, an accessory protein needed during the final step in the assembly of 30S ribosomal subunit, possibly for assembly of the head region. Essential for efficient processing of 16S rRNA. May be needed both before and after RbfA during the maturation of 16S rRNA. It has affinity for free ribosomal 30S subunits but not for 70S ribosomes. This chain is Ribosome maturation factor RimM, found in Chlorobium phaeobacteroides (strain DSM 266 / SMG 266 / 2430).